The following is a 200-amino-acid chain: Probable GTP-binding protein EngB (200 aa).

The EngB-type G domain maps to 24–198 (EGMEVAFAGR…QAQLDEWLGI (175 aa)). Residues 32–39 (GRSNVGKS), 59–63 (GRTQM), 77–80 (DLPG), 144–147 (TKSD), and 177–179 (FSA) each bind GTP. Residues serine 39 and threonine 61 each coordinate Mg(2+).

Belongs to the TRAFAC class TrmE-Era-EngA-EngB-Septin-like GTPase superfamily. EngB GTPase family. It depends on Mg(2+) as a cofactor.

Its function is as follows. Necessary for normal cell division and for the maintenance of normal septation. The polypeptide is Probable GTP-binding protein EngB (Nitrosococcus oceani (strain ATCC 19707 / BCRC 17464 / JCM 30415 / NCIMB 11848 / C-107)).